Reading from the N-terminus, the 415-residue chain is Ribulose bisphosphate carboxylase/oxygenase activase (415 aa).

ATP is bound at residue 37–44 (GRKGEGKT).

This sequence belongs to the RuBisCO activase family.

Activation of RuBisCO (ribulose-1,5-bisohosphate carboxylase/oxygenase; EC 4.1.1.39) involves the ATP-dependent carboxylation of the epsilon-amino group of lysine leading to a carbamate structure. The chain is Ribulose bisphosphate carboxylase/oxygenase activase (rca) from Anabaena sp. (strain CA / ATCC 33047).